A 518-amino-acid polypeptide reads, in one-letter code: Bifunctional purine biosynthesis protein PurH (518 aa).

Positions 1-146 (MSPIALLSVS…KNHQDVLVVT (146 aa)) constitute an MGS-like domain.

The protein belongs to the PurH family.

The catalysed reaction is (6R)-10-formyltetrahydrofolate + 5-amino-1-(5-phospho-beta-D-ribosyl)imidazole-4-carboxamide = 5-formamido-1-(5-phospho-D-ribosyl)imidazole-4-carboxamide + (6S)-5,6,7,8-tetrahydrofolate. It catalyses the reaction IMP + H2O = 5-formamido-1-(5-phospho-D-ribosyl)imidazole-4-carboxamide. Its pathway is purine metabolism; IMP biosynthesis via de novo pathway; 5-formamido-1-(5-phospho-D-ribosyl)imidazole-4-carboxamide from 5-amino-1-(5-phospho-D-ribosyl)imidazole-4-carboxamide (10-formyl THF route): step 1/1. It participates in purine metabolism; IMP biosynthesis via de novo pathway; IMP from 5-formamido-1-(5-phospho-D-ribosyl)imidazole-4-carboxamide: step 1/1. The protein is Bifunctional purine biosynthesis protein PurH of Prochlorococcus marinus (strain NATL2A).